A 591-amino-acid polypeptide reads, in one-letter code: Thiamine transporter thi9 (591 aa).

A compositionally biased stretch (polar residues) spans 1-22 (MPSSQISHQDPELGQTSSGSSS). The disordered stretch occupies residues 1-42 (MPSSQISHQDPELGQTSSGSSSIKEKAEPQLYAGPIDPARRP). The next 5 helical transmembrane spans lie at 98 to 118 (LTFS…AMLV), 342 to 362 (IFYS…LYLF), 397 to 417 (VVMN…SVLA), 450 to 470 (ITVI…SAVA), and 545 to 565 (YAVV…IVIP). Ser-585 is subject to Phosphoserine.

The protein belongs to the amino acid-polyamine-organocation (APC) superfamily.

It localises to the endoplasmic reticulum membrane. It is found in the cell membrane. Thiamine transporter involved in the cellular uptake of thiamine. Pyrithiamine, oxythiamine, amprolium, and the thiazole part of thiamine have been shown to be also substrates of thi9. This is Thiamine transporter thi9 (thi9) from Schizosaccharomyces pombe (strain 972 / ATCC 24843) (Fission yeast).